The primary structure comprises 460 residues: Zinc transporter 6 (460 aa).

Residues 1–33 are Cytoplasmic-facing; that stretch reads MGTIHLFRKSQRSLVGKLTHEFRLVAADRRSWK. A helical transmembrane segment spans residues 34–54; that stretch reads ILLFGAINLICIGFLLMWCSS. The Extracellular portion of the chain corresponds to 55-64; it reads TNSIALTAYT. A helical transmembrane segment spans residues 65–85; it reads YLTIFDLFSLITCLISYWVMV. The Cytoplasmic portion of the chain corresponds to 86 to 98; it reads KKPSPVYSFGFER. Residues 99 to 119 traverse the membrane as a helical segment; that stretch reads FEVLAVFASTVLAQLGALFIL. Residues 120–134 lie on the Extracellular side of the membrane; it reads KESAERFLEQPEIHT. The chain crosses the membrane as a helical span at residues 135-155; it reads GRLLVGTFVALFFNLFTMLSV. At 156–200 the chain is on the cytoplasmic side; the sequence is RNKPFAYVSEAASTSWLQEHVADLSRSICGIIPGLSSIFLPRMNP. Residues 201-221 form a helical membrane-spanning segment; it reads FVLIDIAGALALCITYMLIEI. Residues 222 to 228 lie on the Extracellular side of the membrane; it reads NNYYAVD. The chain crosses the membrane as a helical span at residues 229-249; the sequence is TASAIAIALMTFGTMYPMSVY. The Cytoplasmic portion of the chain corresponds to 250-460; that stretch reads SGKVLLQTTP…GTNTRGQSRP (211 aa). The tract at residues 372-392 is disordered; it reads PVTSTPAKPSSPPPEFSFNTP.

This sequence belongs to the cation diffusion facilitator (CDF) transporter (TC 2.A.4) family. SLC30A subfamily. As to quaternary structure, heterodimer with SLC30A5; form a functional zinc ion transmembrane transporter.

It is found in the golgi apparatus. Its subcellular location is the trans-Golgi network membrane. In terms of biological role, has probably no intrinsic transporter activity but together with SLC30A5 forms a functional zinc ion:proton antiporter heterodimer, mediating zinc entry into the lumen of organelles along the secretory pathway. As part of that zinc ion:proton antiporter, contributes to zinc ion homeostasis within the early secretory pathway and regulates the activation and folding of enzymes like alkaline phosphatases and enzymes involved in phosphatidylinositol glycan anchor biosynthesis. The sequence is that of Zinc transporter 6 (SLC30A6) from Gallus gallus (Chicken).